Consider the following 124-residue polypeptide: Holo-[acyl-carrier-protein] synthase (124 aa).

Mg(2+) is bound by residues Asp7 and Glu55.

Belongs to the P-Pant transferase superfamily. AcpS family. Mg(2+) serves as cofactor.

The protein localises to the cytoplasm. It carries out the reaction apo-[ACP] + CoA = holo-[ACP] + adenosine 3',5'-bisphosphate + H(+). Functionally, transfers the 4'-phosphopantetheine moiety from coenzyme A to a Ser of acyl-carrier-protein. The sequence is that of Holo-[acyl-carrier-protein] synthase from Borreliella afzelii (strain PKo) (Borrelia afzelii).